The primary structure comprises 246 residues: O-antigen export system ATP-binding protein RfbB (246 aa).

Residues 22 to 246 (SGIKDLVFHP…IIELYKQAMA (225 aa)) enclose the ABC transporter domain. 63–70 (GRNGAGKS) provides a ligand contact to ATP.

It belongs to the ABC transporter superfamily.

It localises to the cell inner membrane. May form an ATP-driven O-antigen export apparatus, in association with RfbA. The sequence is that of O-antigen export system ATP-binding protein RfbB (rfbB) from Klebsiella pneumoniae.